Here is a 296-residue protein sequence, read N- to C-terminus: Cation-efflux pump FieF (296 aa).

Residues 1–18 (MTQTSQYDFWVKLASRAS) lie on the Cytoplasmic side of the membrane. The chain crosses the membrane as a helical span at residues 19-32 (VATALTLITIKLLA). Topologically, residues 33 to 43 (WLYSGSASMLA) are periplasmic. Residues 44–60 (SLTDSFADTLASIINFI) traverse the membrane as a helical segment. 5 residues coordinate Zn(2+): Asp47, Asp51, Asp70, His73, and His77. The Cytoplasmic segment spans residues 61 to 83 (AIRYAIVPADHDHRYGHGKAEPL). The chain crosses the membrane as a helical span at residues 84 to 105 (AALAQSAFIMGSAFLLLFYGGE). The Periplasmic segment spans residues 106 to 119 (RLLNPSPVENATLG). A helical membrane pass occupies residues 120–138 (VVVSVVAIVLTLALVLLQK). Over 139 to 145 (RALAATN) the chain is Cytoplasmic. A helical membrane pass occupies residues 146 to 160 (STVVEADSLHYKSDL). Positions 155 and 159 each coordinate Zn(2+). The Periplasmic segment spans residues 161–180 (FLNAAVLLALVLSQYGWWWA). Residues 181 to 200 (DGLFAVLIACYIGQQAFDLG) form a helical membrane-spanning segment. The Cytoplasmic segment spans residues 201–296 (YRSIQALLDR…DPVQVEPTTQ (96 aa)). Zn(2+) is bound by residues His234, Asp235, His250, His263, His285, and Asp287.

This sequence belongs to the cation diffusion facilitator (CDF) transporter (TC 2.A.4) family. FieF subfamily. As to quaternary structure, homodimer. The subunits are held together in a parallel orientation through zinc binding at the interface of the cytoplasmic domains.

The protein resides in the cell inner membrane. The enzyme catalyses Zn(2+)(in) + H(+)(out) = Zn(2+)(out) + H(+)(in). The catalysed reaction is Cd(2+)(in) + H(+)(out) = Cd(2+)(out) + H(+)(in). It catalyses the reaction Fe(2+)(in) + H(+)(out) = Fe(2+)(out) + H(+)(in). With respect to regulation, cytoplasmic zinc binding may trigger movements of two electrically repulsive cytoplasmic domains and reorient transmembrane helices, thereby modulating coordination geometry of the active site for zinc transport. It may modulate activity in response to cytoplasmic metal fluctuations. Functionally, divalent metal cation transporter which exports Zn(2+), Cd(2+) and possibly Fe(2+). Zn(2+)/H(+) antiporter capable of using the proton motive force to remove Zn(2+) from the cytoplasm. May be involved in zinc and iron detoxification by efflux. This is Cation-efflux pump FieF from Shewanella oneidensis (strain ATCC 700550 / JCM 31522 / CIP 106686 / LMG 19005 / NCIMB 14063 / MR-1).